Consider the following 208-residue polypeptide: MARYLGADCKLCRREKMKLFLKGSKCESPKCPIEERPYPPGEHGRTRAKESEYLLQLREKQKCARIYGVLEKQFRRYYEEASRKTGRTGENLLRILESRLDNVVYRAGFAASRDQARQLVRHGHFLVNGRRVDIPSYRVSENDVIEVAEKSRELTPFVIARAVAGERTVPPWLEVIPNRLRILVHSLPSRQVIDTPVQEQLIVEFYSK.

One can recognise an S4 RNA-binding domain in the interval 98-163; sequence SRLDNVVYRA…LTPFVIARAV (66 aa).

It belongs to the universal ribosomal protein uS4 family. Part of the 30S ribosomal subunit. Contacts protein S5. The interaction surface between S4 and S5 is involved in control of translational fidelity.

Functionally, one of the primary rRNA binding proteins, it binds directly to 16S rRNA where it nucleates assembly of the body of the 30S subunit. In terms of biological role, with S5 and S12 plays an important role in translational accuracy. This Acidothermus cellulolyticus (strain ATCC 43068 / DSM 8971 / 11B) protein is Small ribosomal subunit protein uS4.